The following is a 425-amino-acid chain: Amidase 1 (425 aa).

An N-acetylalanine modification is found at A2. Residues K36 and S113 each act as charge relay system in the active site. The Acyl-ester intermediate role is filled by S137.

The protein belongs to the amidase family. Expressed in cotyledons, leaves and flower buds. Lower levels in roots, stems and siliques.

It localises to the cytoplasm. It is found in the nucleus. Its subcellular location is the nucleoplasm. It catalyses the reaction a monocarboxylic acid amide + H2O = a monocarboxylate + NH4(+). The enzyme catalyses indole-3-acetamide + H2O = (indol-3-yl)acetate + NH4(+). The catalysed reaction is 2-phenylacetamide + H2O = 2-phenylacetate + NH4(+). It carries out the reaction L-asparagine + H2O = L-aspartate + NH4(+). It catalyses the reaction 1-naphthaleneacetamide + H2O = 1-naphthaleneacetate + NH4(+). Its activity is regulated as follows. Inhibited by phenylmethylsulfonyl fluoride (PMSF). In terms of biological role, amidase involved in auxin biosynthesis. Converts indole-3-acetamide to indole-3-acetate. Converts phenyl-2-acetamide (PAM) to phenyl-2-acetate. Substrate preference is PAM &gt; IAM. Can also use L-asparagine and 1-naphtalene-acetamide as substrates, but not indole-3-acetonitrile or indole-3-acetyl-L-aspartic acid. This is Amidase 1 from Arabidopsis thaliana (Mouse-ear cress).